The following is a 90-amino-acid chain: Lantipeptide prochlorosin 1.7 (90 aa).

A propeptide spanning residues Met-1–Gly-68 is cleaved from the precursor. 2,3-didehydrobutyrine is present on residues Thr-69 and Thr-73. A cross-link (lanthionine (Ser-Cys)) is located at residues Ser-76 to Cys-79. Cross-links (beta-methyllanthionine (Thr-Cys)) lie at residues Thr-78–Cys-82 and Thr-81–Cys-90.

In terms of processing, cross-links are proved in vitro, when coepressed in E.coli with the ProcM lanthionine synthetase. Post-translationally, the lanthionine residue has a DL configuration (with 2S,6R stereochemistry), whereas the beta-methyllanthionine residues have a DL configuration (with 2S,3S,6R stereochemistry). Maturation of prochlorosin involves the enzymatic conversion of Thr, and Ser into dehydrated AA and the formation of thioether bonds with cysteines. This is followed by membrane translocation and cleavage of the modified precursor.

Its subcellular location is the secreted. In terms of biological role, lanthionine-containing peptide (lantipeptide) with unknown function. Does not show antibiotic activity against Lactococcus lactis 117 and Bacillus subtilis 6633 bacteria. Organisms that produce this peptide live in oligotrophic environments at very dilute concentrations, suggesting this peptide is not secreted to influence other bacteria. This chain is Lantipeptide prochlorosin 1.7, found in Prochlorococcus marinus (strain MIT 9313).